The sequence spans 277 residues: S-formylglutathione hydrolase FrmB (277 aa).

Residues S145, D221, and H254 each act as charge relay system in the active site.

This sequence belongs to the esterase D family.

It carries out the reaction S-formylglutathione + H2O = formate + glutathione + H(+). Its function is as follows. Serine hydrolase involved in the detoxification of formaldehyde. Hydrolyzes S-formylglutathione to glutathione and formate. The protein is S-formylglutathione hydrolase FrmB (frmB) of Escherichia coli (strain ATCC 8739 / DSM 1576 / NBRC 3972 / NCIMB 8545 / WDCM 00012 / Crooks).